Here is a 251-residue protein sequence, read N- to C-terminus: MPDPRDDDEAATAMPERAFFGRRKGHKLRSHQADLIAELLPRLSFDLGAPAPARLETLFASGIAEVRLEIGFGGGEHLIAEALAHPTTGFIGCEPYVNGMAKILAQIEARELGNIRLFAGDAAELLAWAPPASLARVDLIHPDPWPKRRHWKRRFVQDTSVAAMARVLHEDGEFRFVSDIDDYCAWTLAHLLRSKEFCWTAERACDWQLPFAGYTMTRYGRKAEREGRRAAYLHFRRAAAAPNDRAKAGEL.

Residues E69, E94, D121, and D143 each contribute to the S-adenosyl-L-methionine site. Residue D143 is part of the active site. K147 and D179 together coordinate substrate.

This sequence belongs to the class I-like SAM-binding methyltransferase superfamily. TrmB family.

The catalysed reaction is guanosine(46) in tRNA + S-adenosyl-L-methionine = N(7)-methylguanosine(46) in tRNA + S-adenosyl-L-homocysteine. It participates in tRNA modification; N(7)-methylguanine-tRNA biosynthesis. Its function is as follows. Catalyzes the formation of N(7)-methylguanine at position 46 (m7G46) in tRNA. The polypeptide is tRNA (guanine-N(7)-)-methyltransferase (Rhodopseudomonas palustris (strain BisB18)).